Reading from the N-terminus, the 222-residue chain is Large ribosomal subunit protein uL4 (222 aa).

The segment at 42–100 is disordered; that stretch reads AAGRQGTHSTKTRGEVRGGGKKPYRQKGTGRARQGSVRAPQFTGGGTVHGPKPRDYAQR. Positions 60–71 are enriched in basic residues; the sequence is GGKKPYRQKGTG.

This sequence belongs to the universal ribosomal protein uL4 family. Part of the 50S ribosomal subunit.

In terms of biological role, one of the primary rRNA binding proteins, this protein initially binds near the 5'-end of the 23S rRNA. It is important during the early stages of 50S assembly. It makes multiple contacts with different domains of the 23S rRNA in the assembled 50S subunit and ribosome. Its function is as follows. Forms part of the polypeptide exit tunnel. The chain is Large ribosomal subunit protein uL4 from Thermobifida fusca (strain YX).